The sequence spans 154 residues: Large ribosomal subunit protein uL13 (154 aa).

The protein belongs to the universal ribosomal protein uL13 family. Part of the 50S ribosomal subunit.

Its function is as follows. This protein is one of the early assembly proteins of the 50S ribosomal subunit, although it is not seen to bind rRNA by itself. It is important during the early stages of 50S assembly. This is Large ribosomal subunit protein uL13 from Rhizobium johnstonii (strain DSM 114642 / LMG 32736 / 3841) (Rhizobium leguminosarum bv. viciae).